Consider the following 633-residue polypeptide: Cyclic GMP-AMP synthase-like receptor 1 (633 aa).

3 disordered regions span residues 23-80 (KVHG…HPHT), 107-214 (FKGP…TDPF), and 250-276 (REDD…RPSS). The span at 29-67 (KQHESAHPPRERHTERTATKRSDETKTASRPTASHEGKT) shows a compositional bias: basic and acidic residues. The segment covering 68-80 (HTTNPRGQVHPHT) has biased composition (polar residues). Composition is skewed to basic and acidic residues over residues 125–143 (RKPE…DHRT), 176–194 (RKPD…DHRT), and 250–274 (REDD…DDRP). 3 residues coordinate Mg(2+): Glu353, Asp355, and Asp455.

This sequence belongs to the mab-21 family. Mg(2+) serves as cofactor. It depends on Mn(2+) as a cofactor.

The enzyme catalyses UTP + ATP = 2',3'-cUAMP + 2 diphosphate. Its function is as follows. Nucleotidyltransferase that catalyzes the formation of cyclic UMP-AMP (2',3'-cUAMP) from ATP and UTP and plays a key role in innate immunity. Acts as a key sensor of double-stranded DNA (dsDNA), the presence of dsDNA in the cytoplasm being a danger signal that triggers the immune responses. Directly binds dsDNA, activating the nucleotidyltransferase activity, leading to synthesis of 2',3'-cUAMP, a second messenger that binds to and activates Sting, thereby triggering the immune response via activation of the NF-kappa-B transcription factor. This Crassostrea virginica (Eastern oyster) protein is Cyclic GMP-AMP synthase-like receptor 1.